The primary structure comprises 710 residues: WD repeat-containing protein CG11141 (710 aa).

2 WD repeats span residues 31-70 (FFPANLNLTCVDATEEFLAMGSDAGIVFWYNRHTGEMQKL) and 133-172 (LHKCVVSCCEWSKNGMKLYSGDRQGVVVLTELDYQAHLSK). The disordered stretch occupies residues 283 to 307 (LNPKQRSEPSGTHHTSASTSSTRHS). Positions 292–307 (SGTHHTSASTSSTRHS) are enriched in low complexity. Residue threonine 488 is modified to Phosphothreonine. Serine 553 is subject to Phosphoserine. 2 disordered regions span residues 612-635 (ASIQTSSRENATNPADDYHVGEPV) and 685-710 (DPLAIHKETPATSDSNTSSEWEFLDN). Polar residues-rich tracts occupy residues 613–624 (SIQTSSRENATN) and 694–704 (PATSDSNTSSE).

It belongs to the WD repeat KIAA0329 family.

In Drosophila melanogaster (Fruit fly), this protein is WD repeat-containing protein CG11141.